The following is a 109-amino-acid chain: Ubiquitin-related modifier 1 homolog (109 aa).

Gly109 carries the 1-thioglycine modification. A Glycyl lysine isopeptide (Gly-Lys) (interchain with K-? in acceptor proteins) cross-link involves residue Gly109.

This sequence belongs to the URM1 family. C-terminal thiocarboxylation occurs in 2 steps, it is first acyl-adenylated (-COAMP) via the hesA/moeB/thiF part of the MOCS3 homolog, then thiocarboxylated (-COSH) via the rhodanese domain of the MOCS3 homolog.

Its subcellular location is the cytoplasm. It participates in tRNA modification; 5-methoxycarbonylmethyl-2-thiouridine-tRNA biosynthesis. Functionally, acts as a sulfur carrier required for 2-thiolation of mcm(5)S(2)U at tRNA wobble positions of cytosolic tRNA(Lys), tRNA(Glu) and tRNA(Gln). Serves as sulfur donor in tRNA 2-thiolation reaction by being thiocarboxylated (-COSH) at its C-terminus by MOCS3. The sulfur is then transferred to tRNA to form 2-thiolation of mcm(5)S(2)U. Also acts as a ubiquitin-like protein (UBL) that is covalently conjugated via an isopeptide bond to lysine residues of target proteins. The thiocarboxylated form serves as substrate for conjugation and oxidative stress specifically induces the formation of UBL-protein conjugates. This is Ubiquitin-related modifier 1 homolog from Anopheles gambiae (African malaria mosquito).